A 463-amino-acid polypeptide reads, in one-letter code: Flotillin-like protein 2 (463 aa).

A lipid anchor (S-palmitoyl cysteine) is attached at Cys35. Residues 305-354 are a coiled coil; the sequence is EYETKVQEANWELYNKQKQAEAVLYEKQKQAEAQKAEADATFYSKQKEAE.

It belongs to the band 7/mec-2 family. Flotillin subfamily. In terms of processing, may be palmitoylated.

Its subcellular location is the cell membrane. The protein localises to the membrane. It localises to the caveola. Functionally, may act as a scaffolding protein within caveolar membranes, functionally participating in formation of caveolae or caveolae-like vesicles. This Arabidopsis thaliana (Mouse-ear cress) protein is Flotillin-like protein 2 (FLOT2).